The primary structure comprises 384 residues: Multidrug/solvent efflux pump periplasmic linker protein MepA (384 aa).

Residues 1–22 (MQFKPAVTALVSAVALATLLSG) form the signal peptide. Residue cysteine 23 is the site of N-palmitoyl cysteine attachment. Residue cysteine 23 is the site of S-diacylglycerol cysteine attachment. Residues 115 to 155 (LAERYKQLIDEQAVSKQEYDDANAKRLQAEASLKSAQIDLR) are a coiled coil. The tract at residues 362–384 (ATNVKKPAGPDQANAAKADAKAE) is disordered. Positions 368 to 378 (PAGPDQANAAK) are enriched in low complexity.

This sequence belongs to the membrane fusion protein (MFP) (TC 8.A.1) family.

The protein localises to the cell inner membrane. Its function is as follows. The periplasmic linker protein component of an organic solvent and antibiotic efflux pump; confers resistance to toluene, hexane, p-xylene, ampicillin, penicillin G, erythromycin, novobiocin and tetracycline. In Pseudomonas putida (Arthrobacter siderocapsulatus), this protein is Multidrug/solvent efflux pump periplasmic linker protein MepA (mepA).